Consider the following 418-residue polypeptide: Bifunctional protein GlmU (418 aa).

Positions 1-236 (MAAVIVLAAG…VWQTEGVNDR (236 aa)) are pyrophosphorylase. UDP-N-acetyl-alpha-D-glucosamine is bound by residues 7–10 (LAAG), Lys-21, Gln-74, 79–80 (GT), 102–104 (YGD), Gly-141, Glu-155, Asn-170, and Asn-234. A Mg(2+)-binding site is contributed by Asp-104. Asn-234 is a Mg(2+) binding site. Residues 237-257 (VQLARMNAEVNRRIVTGWMRA) form a linker region. The segment at 258 to 418 (GVTIIDPTST…DDTLNPEADQ (161 aa)) is N-acetyltransferase. Positions 339 and 357 each coordinate UDP-N-acetyl-alpha-D-glucosamine. His-369 serves as the catalytic Proton acceptor. Residue Tyr-372 participates in UDP-N-acetyl-alpha-D-glucosamine binding. Ala-386 contributes to the acetyl-CoA binding site.

This sequence in the N-terminal section; belongs to the N-acetylglucosamine-1-phosphate uridyltransferase family. It in the C-terminal section; belongs to the transferase hexapeptide repeat family. As to quaternary structure, homotrimer. The cofactor is Mg(2+).

It localises to the cytoplasm. The enzyme catalyses alpha-D-glucosamine 1-phosphate + acetyl-CoA = N-acetyl-alpha-D-glucosamine 1-phosphate + CoA + H(+). The catalysed reaction is N-acetyl-alpha-D-glucosamine 1-phosphate + UTP + H(+) = UDP-N-acetyl-alpha-D-glucosamine + diphosphate. Its pathway is nucleotide-sugar biosynthesis; UDP-N-acetyl-alpha-D-glucosamine biosynthesis; N-acetyl-alpha-D-glucosamine 1-phosphate from alpha-D-glucosamine 6-phosphate (route II): step 2/2. The protein operates within nucleotide-sugar biosynthesis; UDP-N-acetyl-alpha-D-glucosamine biosynthesis; UDP-N-acetyl-alpha-D-glucosamine from N-acetyl-alpha-D-glucosamine 1-phosphate: step 1/1. It functions in the pathway bacterial outer membrane biogenesis; LPS lipid A biosynthesis. Functionally, catalyzes the last two sequential reactions in the de novo biosynthetic pathway for UDP-N-acetylglucosamine (UDP-GlcNAc). The C-terminal domain catalyzes the transfer of acetyl group from acetyl coenzyme A to glucosamine-1-phosphate (GlcN-1-P) to produce N-acetylglucosamine-1-phosphate (GlcNAc-1-P), which is converted into UDP-GlcNAc by the transfer of uridine 5-monophosphate (from uridine 5-triphosphate), a reaction catalyzed by the N-terminal domain. The sequence is that of Bifunctional protein GlmU from Cutibacterium acnes (strain DSM 16379 / KPA171202) (Propionibacterium acnes).